The primary structure comprises 344 residues: Arginine N-succinyltransferase (344 aa).

Leucine 125 contributes to the succinyl-CoA binding site. Residue histidine 229 is the Proton donor of the active site.

This sequence belongs to the arginine N-succinyltransferase family.

It carries out the reaction succinyl-CoA + L-arginine = N(2)-succinyl-L-arginine + CoA + H(+). It functions in the pathway amino-acid degradation; L-arginine degradation via AST pathway; L-glutamate and succinate from L-arginine: step 1/5. Functionally, catalyzes the transfer of succinyl-CoA to arginine to produce N(2)-succinylarginine. The chain is Arginine N-succinyltransferase from Escherichia coli (strain 55989 / EAEC).